Here is a 324-residue protein sequence, read N- to C-terminus: NADH-ubiquinone oxidoreductase chain 1 (324 aa).

Helical transmembrane passes span 9 to 29 (LINPLAYAVPVLIAVAFLTLV), 75 to 95 (ILFLTAPVLALILAMMLWAPM), 106 to 126 (LGILFIMAISSLAVYSILGSG), 146 to 166 (ISYEVSLGLILLSAVIFSGGY), 178 to 198 (TWLLLPLWPLAIMWFISTLAE), 212 to 232 (ELVSGFNVEYAAGPFALFFLA), 259 to 279 (ELMTISIATKTAMLSILFLWM), and 299 to 319 (FLPITLVLVLWHIALPIALAG).

It belongs to the complex I subunit 1 family. As to quaternary structure, core subunit of respiratory chain NADH dehydrogenase (Complex I) which is composed of 45 different subunits.

The protein localises to the mitochondrion inner membrane. It carries out the reaction a ubiquinone + NADH + 5 H(+)(in) = a ubiquinol + NAD(+) + 4 H(+)(out). Core subunit of the mitochondrial membrane respiratory chain NADH dehydrogenase (Complex I) which catalyzes electron transfer from NADH through the respiratory chain, using ubiquinone as an electron acceptor. Essential for the catalytic activity and assembly of complex I. The polypeptide is NADH-ubiquinone oxidoreductase chain 1 (mt-nd1) (Danio rerio (Zebrafish)).